The sequence spans 543 residues: MSNIEHGLSFIDIMVFAIYVAIIIGVGLWVSRDKKGTQKSTEDYFLAGKSLPWWAVGASLIAANISAEQFIGMSGSGYSIGLAIASYEWMSAITLIIVGKYFLPIFIEKGIYTIPEFVEKRFNKKLKTILAVFWISLYIFVNLTSVLYLGGLALETILGIPLMYSILGLALFALVYSIYGGLSAVVWTDVIQVFFLVLGGFMTTYMAVSFIGGTDGWFAGVSKMVDAAPGHFEMILDQSNPQYMNLPGIAVLIGGLWVANLYYWGFNQYIIQRTLAAKSVSEAQKGIVFAAFLKLIVPFLVVLPGIAAYVITSDPQLMASLGDIAATNLPSAANADKAYPWLTQFLPVGVKGVVFAALAAAIVSSLASMLNSTATIFTMDIYKEYISPDSGDHKLVNVGRTAAVVALIIACLIAPMLGGIGQAFQYIQEYTGLVSPGILAVFLLGLFWKKTTSKGAIIGVVASIPFALFLKFMPLSMPFMDQMLYTLLFTMVVIAFTSLSTSINDDDPKGISVTSSMFVTDRSFNIAAYGIMIVLAVLYTLFW.

14 consecutive transmembrane segments (helical) span residues 10–30, 45–65, 79–99, 129–149, 156–176, 193–213, 246–266, 287–307, 345–365, 401–421, 427–447, 455–475, 483–503, and 523–543; these read FIDIMVFAIYVAIIIGVGLWV, FLAGKSLPWWAVGASLIAANI, SIGLAIASYEWMSAITLIIVG, ILAVFWISLYIFVNLTSVLYL, TILGIPLMYSILGLALFALVY, VFFLVLGGFMTTYMAVSFIGG, LPGIAVLIGGLWVANLYYWGF, IVFAAFLKLIVPFLVVLPGIA, FLPVGVKGVVFAALAAAIVSS, TAAVVALIIACLIAPMLGGIG, IQEYTGLVSPGILAVFLLGLF, GAIIGVVASIPFALFLKFMPL, MLYTLLFTMVVIAFTSLSTSI, and SFNIAAYGIMIVLAVLYTLFW.

It is found in the cell membrane. Actively transports glucose into cells by Na(+) cotransport. The chain is Sodium/glucose cotransporter (sglT) from Vibrio parahaemolyticus.